We begin with the raw amino-acid sequence, 423 residues long: MSYVIDRRLNGKNKSTVNRQRFLRRYREHIKKAVEEAVSRRSITDMEHGEQISIPGRDIDEPVLHHGRGGKQTIVHPGNKEFTAGERIPRPQGGGGGRGSGKASNSGEGMDEFVFQITQEEFLDFMFEDLELPNLVKRHLTGADTFKTVRAGISNEGNPSRINIIRTLRSAHARRIALSGSSRAKLREAKAELLRLRTEEPDNFSDIQEIEAEIERLSARIHRVPFLDTFDLKYNLLTKQPNPSSKAVMFCLMDVSGSMTQATKDIAKRFFILLYLFLKRNYDKIEVVFIRHHTSAKEVDEEEFFYSRETGGTIVSSALKLMQEIMAERYPINEWNIYAAQASDGDNWNDDSPVCRDILINQIMPFVQYFTYVEITPREHQALWFEYEQVAEAFDESFAQQQLVSAADIYPVFRELFQRRLVS.

The segment at 65-108 (HHGRGGKQTIVHPGNKEFTAGERIPRPQGGGGGRGSGKASNSGE) is disordered.

It belongs to the UPF0229 family.

This is UPF0229 protein Pmen_4018 from Ectopseudomonas mendocina (strain ymp) (Pseudomonas mendocina).